The following is a 349-amino-acid chain: Glycerol-3-phosphate dehydrogenase [NAD(+)], cytoplasmic (349 aa).

10–15 (GSGNWG) serves as a coordination point for NAD(+). Lysine 120 contacts substrate. Position 153 (alanine 153) interacts with NAD(+). The Proton acceptor role is filled by lysine 204. Arginine 269 serves as a coordination point for NAD(+). A substrate-binding site is contributed by 269 to 270 (RN). Lysine 289 carries the post-translational modification N6-succinyllysine. The NAD(+) site is built by lysine 296 and glutamine 298. Tyrosine 326 carries the phosphotyrosine modification.

The protein belongs to the NAD-dependent glycerol-3-phosphate dehydrogenase family. Homodimer.

Its subcellular location is the cytoplasm. It carries out the reaction sn-glycerol 3-phosphate + NAD(+) = dihydroxyacetone phosphate + NADH + H(+). Functionally, has glycerol-3-phosphate dehydrogenase activity. The sequence is that of Glycerol-3-phosphate dehydrogenase [NAD(+)], cytoplasmic (GPD1) from Bos taurus (Bovine).